The sequence spans 465 residues: MMKMSKEYSTISKIYGPLMIVEGVKGVAYGEVVEIETESGEKRKGQVLDARENMAIVQVFEGTRDLDIKTTSVRFTGETLKVPVSMDMLGRIFNGIGKPIDGGPEIIPEDRRDVHGAPLNPVARAYPRDFIQTGISAIDGMNTLVRGQKLPIFSGSGLPHNQLAAQIARQAKVLGEEESFAVVFAAMGITYEEANFFKKSFEETGAIERAVLFLNLADDPAIERIITPRMALTVAEYLAFDYDMHVLVILTDMTNYCEALREISAAREEVPGRRGYPGYMYTDLATIYERAGRIRGRKGSITQMPILTMPDDDITHPIPDLTGYITEGQIVLSRELHRKGIYPPIDVLPSLSRLMKDGIGKGKTREDHPQLAQQLYAAYAEGRSLRDLVAVVGEEALSETDKKYLEFADRFEREFVAQGYYEDRSIEETLDLGWELLSILPESELKRVKKEMIMKYHPKYRKRSS.

This sequence belongs to the ATPase alpha/beta chains family. As to quaternary structure, has multiple subunits with at least A(3), B(3), C, D, E, F, H, I and proteolipid K(x).

It is found in the cell membrane. Functionally, component of the A-type ATP synthase that produces ATP from ADP in the presence of a proton gradient across the membrane. The B chain is a regulatory subunit. In Pyrococcus horikoshii (strain ATCC 700860 / DSM 12428 / JCM 9974 / NBRC 100139 / OT-3), this protein is A-type ATP synthase subunit B.